Consider the following 481-residue polypeptide: Aspartyl/glutamyl-tRNA(Asn/Gln) amidotransferase subunit B (481 aa).

It belongs to the GatB/GatE family. GatB subfamily. As to quaternary structure, heterotrimer of A, B and C subunits.

The catalysed reaction is L-glutamyl-tRNA(Gln) + L-glutamine + ATP + H2O = L-glutaminyl-tRNA(Gln) + L-glutamate + ADP + phosphate + H(+). It carries out the reaction L-aspartyl-tRNA(Asn) + L-glutamine + ATP + H2O = L-asparaginyl-tRNA(Asn) + L-glutamate + ADP + phosphate + 2 H(+). Functionally, allows the formation of correctly charged Asn-tRNA(Asn) or Gln-tRNA(Gln) through the transamidation of misacylated Asp-tRNA(Asn) or Glu-tRNA(Gln) in organisms which lack either or both of asparaginyl-tRNA or glutaminyl-tRNA synthetases. The reaction takes place in the presence of glutamine and ATP through an activated phospho-Asp-tRNA(Asn) or phospho-Glu-tRNA(Gln). This chain is Aspartyl/glutamyl-tRNA(Asn/Gln) amidotransferase subunit B, found in Cellvibrio japonicus (strain Ueda107) (Pseudomonas fluorescens subsp. cellulosa).